A 124-amino-acid chain; its full sequence is Glycine cleavage system H protein (124 aa).

Positions 22-103 (VFVVGITDNA…AYTAWIFKIK (82 aa)) constitute a Lipoyl-binding domain. The residue at position 63 (Lys63) is an N6-lipoyllysine.

It belongs to the GcvH family. The glycine cleavage system is composed of four proteins: P, T, L and H. It depends on (R)-lipoate as a cofactor.

Functionally, the glycine cleavage system catalyzes the degradation of glycine. The H protein shuttles the methylamine group of glycine from the P protein to the T protein. The sequence is that of Glycine cleavage system H protein from Bordetella pertussis (strain Tohama I / ATCC BAA-589 / NCTC 13251).